We begin with the raw amino-acid sequence, 349 residues long: tRNA pseudouridine synthase D (349 aa).

F27 contributes to the substrate binding site. D80 (nucleophile) is an active-site residue. Residue N129 participates in substrate binding. Positions 155-303 (GVPNYFGAQR…VEAARRAMLL (149 aa)) constitute a TRUD domain. F329 is a substrate binding site.

It belongs to the pseudouridine synthase TruD family.

It catalyses the reaction uridine(13) in tRNA = pseudouridine(13) in tRNA. Functionally, responsible for synthesis of pseudouridine from uracil-13 in transfer RNAs. This chain is tRNA pseudouridine synthase D, found in Escherichia coli O8 (strain IAI1).